Here is a 326-residue protein sequence, read N- to C-terminus: Protein phosphatase PTC7 homolog fig (326 aa).

The tract at residues 40 to 83 (VQGKSKPRSPHLTSPQCSPEHRPRRFRPPSASGRTAFSSAPRPK) is disordered. Residues 64 to 314 (RFRPPSASGR…DDITVVLASV (251 aa)) enclose the PPM-type phosphatase domain. Mn(2+)-binding residues include D91, G92, and D236.

The protein belongs to the PP2C family. The cofactor is Mg(2+). Mn(2+) is required as a cofactor.

The enzyme catalyses O-phospho-L-seryl-[protein] + H2O = L-seryl-[protein] + phosphate. The catalysed reaction is O-phospho-L-threonyl-[protein] + H2O = L-threonyl-[protein] + phosphate. This chain is Protein phosphatase PTC7 homolog fig, found in Drosophila persimilis (Fruit fly).